The sequence spans 89 residues: Small ribosomal subunit protein uS15 (89 aa).

This sequence belongs to the universal ribosomal protein uS15 family. In terms of assembly, part of the 30S ribosomal subunit. Forms a bridge to the 50S subunit in the 70S ribosome, contacting the 23S rRNA.

Its function is as follows. One of the primary rRNA binding proteins, it binds directly to 16S rRNA where it helps nucleate assembly of the platform of the 30S subunit by binding and bridging several RNA helices of the 16S rRNA. Forms an intersubunit bridge (bridge B4) with the 23S rRNA of the 50S subunit in the ribosome. This Salinispora arenicola (strain CNS-205) protein is Small ribosomal subunit protein uS15.